A 1140-amino-acid chain; its full sequence is Multiple epidermal growth factor-like domains protein 10 (1140 aa).

The N-terminal stretch at 1–25 is a signal peptide; the sequence is MVISLNSCLSFICLLLCHWIGTASP. Positions 1-857 are necessary for interaction with AP2M1, self-assembly and formation of the irregular, mosaic-like adhesion pattern; the sequence is MVISLNSCLS…ALPADSYQIG (857 aa). The Extracellular segment spans residues 26 to 857; it reads LNLEDPNVCS…ALPADSYQIG (832 aa). An EMI domain is found at 30 to 107; it reads DPNVCSHWES…FYESGEMCVP (78 aa). 48 disulfide bridges follow: C34–C95, C60–C69, C94–C105, C109–C118, C113–C124, C126–C135, C148–C160, C154–C167, C169–C178, C191–C203, C197–C210, C212–C221, C234–C246, C240–C253, C255–C264, C281–C289, C283–C296, C298–C307, C320–C332, C326–C339, C341–C350, C409–C421, C415–C428, C430–C439, C456–C464, C458–C471, C473–C482, C495–C507, C501–C514, C516–C525, C542–C550, C544–C557, C559–C568, C581–C593, C587–C600, C602–C611, C669–C681, C675–C688, C690–C699, C716–C724, C718–C731, C733–C742, C755–C767, C761–C774, C776–C785, C802–C810, C804–C817, and C819–C828. 15 consecutive EGF-like domains span residues 106-136, 144-179, 187-222, 230-265, 278-308, 316-351, 405-440, 453-483, 491-526, 539-569, 577-612, 665-700, 713-743, 751-786, and 799-829; these read VPHC…TNCS, WGPH…WRCE, YGND…AFCE, HGPQ…TVCG, SQEC…ERCQ, YGVL…ERCE, YGEA…IDCS, SSRC…VDCS, WGFG…EKCE, AERC…VHCD, WGPN…TTCQ, FGKN…SDCS, IHTC…LYCT, YGKD…RHCE, and RQIC…ARCD. Residue N134 is glycosylated (N-linked (GlcNAc...) asparagine). Residue N496 is glycosylated (N-linked (GlcNAc...) asparagine). The helical transmembrane segment at 858–878 threads the bilayer; it reads AIAGIIILVLVVLFLLALFII. Topologically, residues 879–1140 are cytoplasmic; it reads YRHKQKGKES…SSSNSSSSSE (262 aa). Positions 945–1140 are necessary for formation of large intracellular vacuoles; it reads RDRMTVTKSK…SSSNSSSSSE (196 aa). The residue at position 1030 (Y1030) is a Phosphotyrosine; by SRC. A disordered region spans residues 1111 to 1140; it reads YDLLPVRDSSSSPKQEDSGGSSSNSSSSSE. Residues 1128–1140 are compositionally biased toward low complexity; that stretch reads SGGSSSNSSSSSE.

It belongs to the MEGF family. As to quaternary structure, homomer. Interacts with GULP1 and ABCA1. Interacts with AP2M1. Does not interact with MEGF11. Binds with high affinity to complement C1q. Interacts (via the cytoplasmic domain) with NOTCH1 (via NICD domain). In terms of processing, phosphorylated on tyrosine residues. Phosphorylation at Tyr-1030 may be important for muscle cell proliferation. Ubiquitinated; mono- and polyubiquitinated forms are detected. In terms of tissue distribution, expressed in muscle (at protein level).

Its subcellular location is the cell membrane. The protein resides in the cell projection. It is found in the phagocytic cup. Its function is as follows. Membrane receptor involved in phagocytosis by macrophages and astrocytes of apoptotic cells. Receptor for C1q, an eat-me signal, that binds phosphatidylserine expressed on the surface of apoptotic cells. Cooperates with ABCA1 within the process of engulfment. Promotes the formation of large intracellular vacuoles and may be responsible for the uptake of amyloid-beta peptides. Necessary for astrocyte-dependent apoptotic neuron clearance in the developing cerebellum. Plays role in muscle cell proliferation, adhesion and motility. Is also an essential factor in the regulation of myogenesis. Controls the balance between skeletal muscle satellite cells proliferation and differentiation through regulation of the notch signaling pathway. May also function in the mosaic spacing of specific neuron subtypes in the retina through homotypic retinal neuron repulsion. Mosaics provide a mechanism to distribute each cell type evenly across the retina, ensuring that all parts of the visual field have access to a full set of processing elements. This is Multiple epidermal growth factor-like domains protein 10 from Homo sapiens (Human).